We begin with the raw amino-acid sequence, 503 residues long: Ell-associated factor Eaf (503 aa).

Polar residues-rich tracts occupy residues 143 to 158 (PGQQ…TNVA) and 170 to 189 (ENST…SRRN). Disordered stretches follow at residues 143 to 223 (PGQQ…PAWD) and 251 to 503 (NGSQ…EDDD). Position 199 is a phosphoserine (Ser-199). Over residues 251–264 (NGSQANTSGSSTGS) the composition is skewed to polar residues. A compositionally biased stretch (basic residues) spans 281–296 (GKQRQAPHHGHAKRQQ). The span at 297 to 311 (RSSPPMVQQQPNFGR) shows a compositional bias: polar residues. Residues 312–326 (NSYNGGNNYAQQQQH) are compositionally biased toward low complexity. The segment covering 382–397 (DSSDSDSGSDSDDSTE) has biased composition (acidic residues). Low complexity-rich tracts occupy residues 415–435 (MHHQ…QQQH) and 484–497 (NDLL…SSNS).

This sequence belongs to the EAF family.

It is found in the nucleus. Functionally, promotes transcriptional elongation by Su(Tpl)/ELL. Essential for development. This chain is Ell-associated factor Eaf, found in Drosophila ananassae (Fruit fly).